Here is a 3530-residue protein sequence, read N- to C-terminus: Unconventional myosin-XV (3530 aa).

Disordered stretches follow at residues 1 to 46, 615 to 710, and 730 to 1057; these read MAKE…RTPK, AGMD…PAHV, and EVPP…QKTL. Residues 663-681 are compositionally biased toward pro residues; sequence PPVPPRPPSSGPPPAPPLS. 3 stretches are compositionally biased toward low complexity: residues 682-693, 753-763, and 823-835; these read PALSGLPRPASP, AAFGFPGASPR, and SPAPRRAAGRLGP. Residues 836 to 850 are compositionally biased toward pro residues; sequence PGSPLPGSPRPPSPP. Residues 859–869 show a composition bias toward low complexity; it reads RSSLNLPSRLP. Over residues 903 to 913 the composition is skewed to basic and acidic residues; sequence PLEHRESPREP. The span at 1027 to 1038 shows a compositional bias: pro residues; sequence TKPPTPAPPKDV. The region spanning 1222 to 1899 is the Myosin motor domain; the sequence is DGVEDMTQLE…LYQLLESMRE (678 aa). 1315–1322 contacts ATP; that stretch reads GESGSGKT. Residues 1323-1350 adopt a coiled-coil conformation; sequence EATKLILRYLAAMNQKREVMQQIKILEA. Positions 1792–1799 are actin-binding; it reads FMRCLKPN. The tract at residues 1888–2029 is neck or regulatory domain; it reads EHLYQLLESM…AQVPQVAPVR (142 aa). IQ domains are found at residues 1902–1924, 1925–1954, and 1955–1976; these read LNLAALTLQRCLRGFFIKRRFRS, LRHKIILLQSRARGYLARQRYQQMRRSLVK, and FRSLVHAYVSRRRYLKLRAEWR. The interval 2030 to 3530 is tail; it reads TPRLQAEPRV…TLPPSEITLL (1501 aa). The 153-residue stretch at 2065–2217 folds into the MyTH4 1 domain; the sequence is MLTVPLRTPL…PTQLEWTATY (153 aa). 4 disordered regions span residues 2311 to 2381, 2414 to 2446, 2490 to 2509, and 2644 to 2665; these read AASR…GEPA, YRMKGGGQPGGGSSSGTEDTPRRPPEPKPIPGL, AEKPPAPEAQPTSVGTGPPA, and TSAPRPSMAPTSALPSRSLEPP. The span at 2349–2371 shows a compositional bias: polar residues; sequence GYSSHNQDGTNGETEAQRGTATH. A compositionally biased stretch (gly residues) spans 2417–2427; that stretch reads KGGGQPGGGSS. The 87-residue stretch at 2867 to 2953 folds into the SH3 domain; it reads KDSDYVVAVR…PSELVQPAAA (87 aa). A MyTH4 2 domain is found at 3050 to 3204; it reads FTKTPLQESL…PSSIELRAML (155 aa). An FERM domain is found at 3209 to 3530; sequence SKRQLFLLPG…TLPPSEITLL (322 aa).

Belongs to the TRAFAC class myosin-kinesin ATPase superfamily. Myosin family. Interacts with the third PDZ domain of WHRN which is necessary for localization of WHRN to stereocilium tips. Interacts with EPS8. Interacts with FASLG. Highly expressed in pituitary. Also expressed at lower levels in adult brain, kidney, liver, lung, pancreas, placenta and skeletal muscle. Not expressed in brain. In the pituitary, highly expressed in anterior gland cells.

Its subcellular location is the cell projection. It is found in the stereocilium. The protein localises to the cytoplasm. It localises to the cytoskeleton. Its function is as follows. Myosins are actin-based motor molecules with ATPase activity. Unconventional myosins serve in intracellular movements. Their highly divergent tails are presumed to bind to membranous compartments, which would be moved relative to actin filaments. Required for the arrangement of stereocilia in mature hair bundles. This chain is Unconventional myosin-XV (MYO15A), found in Homo sapiens (Human).